A 303-amino-acid polypeptide reads, in one-letter code: MKMQLMDLKKQGIDIQENIPLSRFTFTKTGGPAQYLAFPKNLDELKILVETVKTNNLPLTVIGNASNLIIRDGGISGLVLILTKMDKIVANQEEATVTADAGARIIDTSEAACEASLSGLEFAAGIPGSVGGAVFMNAGAYGGETEFVIKSVRVLTREGKFKTYTHDEMEFGYRHSLVQETGDIVISATFGLEPGDKWAIKAKMEYFNGLRRAKQPLEYPSCGSVFKRPTGHFVGPMIIKAGLQGKRIGGAEDSKKHAGFIVNVGGATATDYLDLIHLIQKTIKKDFDVDLQTEVRIIGKEKD.

The FAD-binding PCMH-type domain maps to Lys28–Gly195. Arg174 is a catalytic residue. The Proton donor role is filled by Ser224. Glu294 is an active-site residue.

This sequence belongs to the MurB family. FAD is required as a cofactor.

Its subcellular location is the cytoplasm. It catalyses the reaction UDP-N-acetyl-alpha-D-muramate + NADP(+) = UDP-N-acetyl-3-O-(1-carboxyvinyl)-alpha-D-glucosamine + NADPH + H(+). It functions in the pathway cell wall biogenesis; peptidoglycan biosynthesis. In terms of biological role, cell wall formation. The chain is UDP-N-acetylenolpyruvoylglucosamine reductase from Lactobacillus gasseri (strain ATCC 33323 / DSM 20243 / BCRC 14619 / CIP 102991 / JCM 1131 / KCTC 3163 / NCIMB 11718 / NCTC 13722 / AM63).